A 253-amino-acid polypeptide reads, in one-letter code: Discoidin-1 subunit B/C (253 aa).

S2 carries the post-translational modification N-acetylserine. An F5/8 type C domain is found at S2–Q152. Residues R79–D81 carry the Cell attachment site motif.

As to quaternary structure, tetramer of four different chains (A to D). As to expression, stalk cells.

Its subcellular location is the cytoplasm. Galactose- and N-acetylgalactosamine-binding lectin. May play a role in cell-substratum adhesion rather than in cell-cell adhesion. May be necessary for the maintenance of normal elongate morphology during aggregation. The polypeptide is Discoidin-1 subunit B/C (dscC-1) (Dictyostelium discoideum (Social amoeba)).